The primary structure comprises 416 residues: Gamma-glutamyl phosphate reductase (416 aa).

The protein belongs to the gamma-glutamyl phosphate reductase family.

The protein localises to the cytoplasm. The catalysed reaction is L-glutamate 5-semialdehyde + phosphate + NADP(+) = L-glutamyl 5-phosphate + NADPH + H(+). The protein operates within amino-acid biosynthesis; L-proline biosynthesis; L-glutamate 5-semialdehyde from L-glutamate: step 2/2. Functionally, catalyzes the NADPH-dependent reduction of L-glutamate 5-phosphate into L-glutamate 5-semialdehyde and phosphate. The product spontaneously undergoes cyclization to form 1-pyrroline-5-carboxylate. This Streptococcus mutans serotype c (strain ATCC 700610 / UA159) protein is Gamma-glutamyl phosphate reductase.